A 219-amino-acid chain; its full sequence is MPFSRRRRVVRRRKPVRRLRRRRRRFFKRAGRGSFRVKLTRFVSITQDISKTTQFSFEITPSDFTEFATLADAFEAVRFTRAKVTVLPQQNVSNNSTSLIPAYCMFPWHKELPTVATFNGFLSIDRAKCFRGTQVGIQHYVPSTLDSIQTKGAAGYEVQSVQTKYKPTIQISGGASTVVLYTGALGMQALSDAPENAQAHYNIKIDMWCTFINQTSFNK.

The interval R5 to R29 is nuclear localization signals.

Belongs to the circoviridae capsid protein family. In terms of assembly, homomultimer. Assembles in the nucleus, presumably in an immature form, then migrates to the cytoplasm once assembled as mature virion. Interacts with Rep; this interaction relocates Rep into the nucleus.

It localises to the host nucleus. Its subcellular location is the virion. In terms of biological role, self-assembles to form the virion icosahedral capsid with a T=1 symmetry. This very small capsid (17-22 nm in diameter) allows the virus to be very stable in the environment and resistant to some disinfectants, including detergents. Essential for the initial attachment to heparan sulfate moieties and chondroitin sulfate B of the host cell surface proteoglycans. After attachment, the virus is endocytosed and traffics to the nucleus. The capsid protein binds and transports the viral genome and Rep across the nuclear envelope. The protein is Capsid protein (Cap) of Homo sapiens (Human).